The chain runs to 651 residues: ATP-binding cassette sub-family G member 5 (651 aa).

The interval 1-32 (MGDLSSLTPGGSMGLQVNRGSQSSLEGAPATA) is disordered. The Cytoplasmic portion of the chain corresponds to 1-383 (MGDLSSLTPG…RVTRNLVRNK (383 aa)). One can recognise an ABC transporter domain in the interval 52-293 (RPWWDITSCR…FNDCGYPCPE (242 aa)). 86–93 (GSSGSGKT) serves as a coordination point for ATP. A helical transmembrane segment spans residues 384 to 404 (LAVITRLLQNLIMGLFLLFFV). One can recognise an ABC transmembrane type-2 domain in the interval 388 to 645 (TRLLQNLIMG…ILGIVVFKIR (258 aa)). Residues 405-421 (LRVRSNVLKGAIQDRVG) lie on the Extracellular side of the membrane. Residues 422–442 (LLYQFVGATPYTGMLNAVNLF) form a helical membrane-spanning segment. Residues 443 to 467 (PVLRAVSDQESQDGLYQKWQMMLAY) are Cytoplasmic-facing. A helical membrane pass occupies residues 468 to 489 (ALHVLPFSVVATMIFSSVCYWT). The Extracellular segment spans residues 490 to 500 (LGLHPEVARFG). Residues 501 to 521 (YFSAALLAPHLIGEFLTLVLL) form a helical membrane-spanning segment. Residues 522–528 (GIVQNPN) lie on the Cytoplasmic side of the membrane. Residues 529 to 549 (IVNSVVALLSIAGVLVGSGFL) form a helical membrane-spanning segment. Residues 550-623 (RNIQEMPIPF…PGATSRFTMN (74 aa)) lie on the Extracellular side of the membrane. 2 N-linked (GlcNAc...) asparagine glycosylation sites follow: N584 and N591. A helical transmembrane segment spans residues 624–644 (FLILYSFIPALVILGIVVFKI). At 645-651 (RDHLISR) the chain is on the cytoplasmic side.

This sequence belongs to the ABC transporter superfamily. ABCG family. Eye pigment precursor importer (TC 3.A.1.204) subfamily. As to quaternary structure, heterodimer with ABCG8. Mg(2+) serves as cofactor. In terms of processing, N-glycosylated. In terms of tissue distribution, strongly expressed in the liver, lower levels in the small intestine and colon.

It localises to the cell membrane. Its subcellular location is the apical cell membrane. It carries out the reaction cholesterol(in) + ATP + H2O = cholesterol(out) + ADP + phosphate + H(+). It catalyses the reaction sitosterol(in) + ATP + H2O = sitosterol(out) + ADP + phosphate + H(+). Its activity is regulated as follows. The ATPase activity of the heterodimer is stimulated by cholate. Taurocholate, glycocholate, taurochenodeoxycholate, glycochenodeoxycholate and taurodeoxycholate also stimulate ATPase activity, but to a lower degree. Glycodeoxycholate has no significant effect on ATPase activity. ATPase activity is inhibited by vanadate and by berillium fluoride. Functionally, ABCG5 and ABCG8 form an obligate heterodimer that mediates Mg(2+)- and ATP-dependent sterol transport across the cell membrane. Plays an essential role in the selective transport of dietary plant sterols and cholesterol in and out of the enterocytes and in the selective sterol excretion by the liver into bile. Required for normal sterol homeostasis. The heterodimer with ABCG8 has ATPase activity. The protein is ATP-binding cassette sub-family G member 5 of Homo sapiens (Human).